The primary structure comprises 520 residues: BBSome complex member BBS4 (520 aa).

Positions 1–26 (MAEVKLGMKTQVPASVESQKPRSKKA) are disordered. Residues 1–66 (MAEVKLGMKT…EQLQETQGLC (66 aa)) form a required for localization to centrosomes region. 10 TPR repeats span residues 67–100 (EYAIYVQALIFRLEGNIQESLELFQTCAVLSPQC), 102–134 (DNLKQVARSLFLLGKHKAATEVYNEAAKLNQKD), 135–167 (WEICHNLGVCYTYLKQFNKAQDQLHSALQLNKH), 168–201 (DLTYIMLGKIHLLQGDLDKAIEIYKKAVEFSPEN), 203–235 (ELLTTLGLLYLQLGVYQKAFEHLGNALTYDPAN), 237–269 (KAILAAGSMMQTHGDFDVALTKYRVVACAIPES), 270–303 (PPLWNNIGMCFFGKKKYVAAISCLKRANYLAPFD), 304–337 (WKILYNLGLVHLTMQQYASAFHFLSAAINFQPKM), 339–371 (ELYMLLAVALTNLEDIENARRAYVEAVRLDKCN), and 373–408 (LVNLNYAVLLYNQGEKKSALAQYQEMEKKVNFLKDN). The interaction with PCM1 stretch occupies residues 101 to 337 (ADNLKQVARS…SAAINFQPKM (237 aa)). Residues 338-520 (GELYMLLAVA…TEASEQKKEK (183 aa)) form a required for localization to centrosomes region. The disordered stretch occupies residues 488–520 (AQLPKPPSLPLEPEPEPTVEASPTEASEQKKEK).

This sequence belongs to the BBS4 family. Part of BBSome complex, that contains BBS1, BBS2, BBS4, BBS5, BBS7, BBS8/TTC8, BBS9 and BBIP10. Interacts with PCM1 and DCTN1. Interacts with DC28B. Interacts with ALDOB and C2CD3. Interacts with PKD1. Interacts with CEP290. Interacts with DLEC1. As to expression, expressed in the hippocampus and dentate gyrus, the columnar epithelial cells of bronchioles, the olfactory epithelium and the inner segment and outer nuclear layer of the retina. Expressed in testis.

It is found in the cytoplasm. It localises to the cytoskeleton. Its subcellular location is the microtubule organizing center. The protein resides in the centrosome. The protein localises to the cell projection. It is found in the cilium membrane. It localises to the centriolar satellite. Its subcellular location is the cilium. The protein resides in the flagellum. Its function is as follows. The BBSome complex is thought to function as a coat complex required for sorting of specific membrane proteins to the primary cilia. The BBSome complex is required for ciliogenesis but is dispensable for centriolar satellite function. This ciliogenic function is mediated in part by the Rab8 GDP/GTP exchange factor, which localizes to the basal body and contacts the BBSome. Rab8(GTP) enters the primary cilium and promotes extension of the ciliary membrane. Firstly the BBSome associates with the ciliary membrane and binds to RAB3IP/Rabin8, the guanosyl exchange factor (GEF) for Rab8 and then the Rab8-GTP localizes to the cilium and promotes docking and fusion of carrier vesicles to the base of the ciliary membrane. The BBSome complex, together with the LTZL1, controls SMO ciliary trafficking and contributes to the sonic hedgehog (SHH) pathway regulation. Required for proper BBSome complex assembly and its ciliary localization. Required for microtubule anchoring at the centrosome but not for microtubule nucleation. May be required for the dynein-mediated transport of pericentriolar proteins to the centrosome. The chain is BBSome complex member BBS4 (Bbs4) from Mus musculus (Mouse).